The following is a 112-amino-acid chain: Ig kappa chain V-III region PC 7132 (112 aa).

Residues D1–C23 form a framework-1 region. A disulfide bridge connects residues C23 and C92. The segment at R24–N38 is complementarity-determining-1. The segment at W39–Y53 is framework-2. The complementarity-determining-2 stretch occupies residues A54–S60. The tract at residues G61 to C92 is framework-3. Positions Q93–T102 are complementarity-determining-3. Positions F103–K112 are framework-4.

The chain is Ig kappa chain V-III region PC 7132 from Mus musculus (Mouse).